The sequence spans 99 residues: Putative membrane protein insertion efficiency factor (99 aa).

Belongs to the UPF0161 family.

It is found in the cell membrane. Could be involved in insertion of integral membrane proteins into the membrane. The polypeptide is Putative membrane protein insertion efficiency factor (Corynebacterium glutamicum (strain ATCC 13032 / DSM 20300 / JCM 1318 / BCRC 11384 / CCUG 27702 / LMG 3730 / NBRC 12168 / NCIMB 10025 / NRRL B-2784 / 534)).